We begin with the raw amino-acid sequence, 500 residues long: Aspartyl/glutamyl-tRNA(Asn/Gln) amidotransferase subunit B (500 aa).

It belongs to the GatB/GatE family. GatB subfamily. As to quaternary structure, heterotrimer of A, B and C subunits.

The catalysed reaction is L-glutamyl-tRNA(Gln) + L-glutamine + ATP + H2O = L-glutaminyl-tRNA(Gln) + L-glutamate + ADP + phosphate + H(+). It catalyses the reaction L-aspartyl-tRNA(Asn) + L-glutamine + ATP + H2O = L-asparaginyl-tRNA(Asn) + L-glutamate + ADP + phosphate + 2 H(+). Functionally, allows the formation of correctly charged Asn-tRNA(Asn) or Gln-tRNA(Gln) through the transamidation of misacylated Asp-tRNA(Asn) or Glu-tRNA(Gln) in organisms which lack either or both of asparaginyl-tRNA or glutaminyl-tRNA synthetases. The reaction takes place in the presence of glutamine and ATP through an activated phospho-Asp-tRNA(Asn) or phospho-Glu-tRNA(Gln). The sequence is that of Aspartyl/glutamyl-tRNA(Asn/Gln) amidotransferase subunit B from Rhizobium meliloti (strain 1021) (Ensifer meliloti).